Consider the following 245-residue polypeptide: NAD-dependent protein deacylase 1 (245 aa).

The region spanning 1-243 (MDEKLLKTIA…DELVRHVRKA (243 aa)) is the Deacetylase sirtuin-type domain. 20–39 (GAGVSAESGIPTFRGKDGLW) serves as a coordination point for NAD(+). Positions 64 and 67 each coordinate substrate. 98–101 (QNVD) contributes to the NAD(+) binding site. Histidine 116 functions as the Proton acceptor in the catalytic mechanism. Zn(2+) contacts are provided by cysteine 124, cysteine 127, cysteine 145, and cysteine 148. NAD(+)-binding positions include 185–187 (GTS), 211–213 (NPD), and alanine 229.

It belongs to the sirtuin family. Class III subfamily. The cofactor is Zn(2+).

It is found in the cytoplasm. The enzyme catalyses N(6)-acetyl-L-lysyl-[protein] + NAD(+) + H2O = 2''-O-acetyl-ADP-D-ribose + nicotinamide + L-lysyl-[protein]. It catalyses the reaction N(6)-succinyl-L-lysyl-[protein] + NAD(+) + H2O = 2''-O-succinyl-ADP-D-ribose + nicotinamide + L-lysyl-[protein]. Its function is as follows. NAD-dependent lysine deacetylase and desuccinylase that specifically removes acetyl and succinyl groups on target proteins. Modulates the activities of several proteins which are inactive in their acylated form. Deacetylates the N-terminal lysine residue of Alba, the major archaeal chromatin protein and that, in turn, increases Alba's DNA binding affinity, thereby repressing transcription. This chain is NAD-dependent protein deacylase 1, found in Archaeoglobus fulgidus (strain ATCC 49558 / DSM 4304 / JCM 9628 / NBRC 100126 / VC-16).